The primary structure comprises 249 residues: Low affinity immunoglobulin gamma Fc region receptor III-A (249 aa).

The signal sequence occupies residues 1–16 (MWQLLPSTALLLVASA). Over 17-198 (RPQAADLPKA…IQGPPVPSTS (182 aa)) the chain is Extracellular. 2 consecutive Ig-like C2-type domains span residues 24 to 104 (PKAV…LEVH) and 119 to 172 (EGEP…YFCR). Disulfide bonds link cysteine 47-cysteine 88 and cysteine 127-cysteine 171. Asparagine 55, asparagine 63, asparagine 166, and asparagine 179 each carry an N-linked (GlcNAc...) asparagine glycan. A helical membrane pass occupies residues 199 to 219 (ALLPFWPHIPFAVVMALLFAV). Residues 220–249 (DTGLYFAMQRHLHNSKRAWENSKVSWKQDP) lie on the Cytoplasmic side of the membrane.

In terms of assembly, forms a heterooligomeric complex with ITAM-containing signaling subunits FCER1G. Interacts (via transmembrane domain) with signaling subunits; this interaction is a prerequisite for receptor complex expression on the cell surface and intracellular signal transduction. Binds the Fc region of antigen-complexed IgG.

The protein localises to the cell membrane. Receptor for the invariable Fc fragment of immunoglobulin gamma (IgG). Optimally activated upon binding of clustered antigen-IgG complexes displayed on cell surfaces, triggers lysis of antibody-coated cells, a process known as antibody-dependent cellular cytotoxicity (ADCC). Does not bind free monomeric IgG, thus avoiding inappropriate effector cell activation in the absence of antigenic trigger. Mediates IgG effector functions on natural killer (NK) cells. Binds antigen-IgG complexes generated upon infection and triggers NK cell-dependent cytokine production and degranulation to limit viral load and propagation. Fc-binding subunit that associates with FCER1G adapter to form functional signaling complexes. Following the engagement of antigen-IgG complexes, triggers phosphorylation of immunoreceptor tyrosine-based activation motif (ITAM)-containing adapter with subsequent activation of phosphatidylinositol 3-kinase signaling and sustained elevation of intracellular calcium that ultimately drive NK cell activation. Mediates enhanced ADCC in response to afucosylated IgGs. This is Low affinity immunoglobulin gamma Fc region receptor III-A from Mustela putorius furo (European domestic ferret).